We begin with the raw amino-acid sequence, 92 residues long: Phosphoribosyl-ATP pyrophosphatase (92 aa).

The protein belongs to the PRA-PH family.

It is found in the cytoplasm. It carries out the reaction 1-(5-phospho-beta-D-ribosyl)-ATP + H2O = 1-(5-phospho-beta-D-ribosyl)-5'-AMP + diphosphate + H(+). Its pathway is amino-acid biosynthesis; L-histidine biosynthesis; L-histidine from 5-phospho-alpha-D-ribose 1-diphosphate: step 2/9. This chain is Phosphoribosyl-ATP pyrophosphatase, found in Leptospira biflexa serovar Patoc (strain Patoc 1 / ATCC 23582 / Paris).